Consider the following 55-residue polypeptide: Spermatid nuclear transition protein 1 (55 aa).

Positions 1–42 are enriched in basic residues; that stretch reads MSTSRKLKSQGMRRGKNRTPHKGVKRSGSKRKYRKSSLKSRK. The segment at 1-55 is disordered; that stretch reads MSTSRKLKSQGMRRGKNRTPHKGVKRSGSKRKYRKSSLKSRKRCDDANRNLRSHL. Phosphoserine occurs at positions 9, 36, 37, and 40.

Belongs to the nuclear transition protein 1 family. As to expression, testis.

Its subcellular location is the nucleus. It localises to the chromosome. Its function is as follows. Plays a key role in the replacement of histones to protamine in the elongating spermatids of mammals. In condensing spermatids, loaded onto the nucleosomes, where it promotes the recruitment and processing of protamines, which are responsible for histone eviction. The polypeptide is Spermatid nuclear transition protein 1 (TNP1) (Bos taurus (Bovine)).